The following is a 428-amino-acid chain: Tryptophan synthase beta chain (428 aa).

The residue at position 92 (Lys92) is an N6-(pyridoxal phosphate)lysine.

The protein belongs to the TrpB family. In terms of assembly, tetramer of two alpha and two beta chains. Pyridoxal 5'-phosphate serves as cofactor.

It carries out the reaction (1S,2R)-1-C-(indol-3-yl)glycerol 3-phosphate + L-serine = D-glyceraldehyde 3-phosphate + L-tryptophan + H2O. It functions in the pathway amino-acid biosynthesis; L-tryptophan biosynthesis; L-tryptophan from chorismate: step 5/5. Its function is as follows. The beta subunit is responsible for the synthesis of L-tryptophan from indole and L-serine. The polypeptide is Tryptophan synthase beta chain (Leptothrix cholodnii (strain ATCC 51168 / LMG 8142 / SP-6) (Leptothrix discophora (strain SP-6))).